Here is a 331-residue protein sequence, read N- to C-terminus: Tetraacyldisaccharide 4'-kinase (331 aa).

60-67 contacts ATP; that stretch reads TVGGTGKT.

The protein belongs to the LpxK family.

The enzyme catalyses a lipid A disaccharide + ATP = a lipid IVA + ADP + H(+). The protein operates within glycolipid biosynthesis; lipid IV(A) biosynthesis; lipid IV(A) from (3R)-3-hydroxytetradecanoyl-[acyl-carrier-protein] and UDP-N-acetyl-alpha-D-glucosamine: step 6/6. In terms of biological role, transfers the gamma-phosphate of ATP to the 4'-position of a tetraacyldisaccharide 1-phosphate intermediate (termed DS-1-P) to form tetraacyldisaccharide 1,4'-bis-phosphate (lipid IVA). The chain is Tetraacyldisaccharide 4'-kinase from Pseudomonas syringae pv. syringae (strain B728a).